We begin with the raw amino-acid sequence, 583 residues long: Scarecrow-like protein 30 (583 aa).

2 disordered regions span residues 107–154 and 182–205; these read GDLE…RKSK and EATE…KSDQ. Polar residues predominate over residues 115-124; that stretch reads GNFSSITSLH. Residues 131–140 are compositionally biased toward basic and acidic residues; that stretch reads ESTRRYRHRD. Residues 200–579 enclose the GRAS domain; the sequence is QQKSDQPVDM…RVLYAVSCWK (380 aa). Positions 207 to 266 are leucine repeat I (LRI); sequence VDMRNLLMQCAQAVASFDQRRAFEKLKEIREHSSRHGDATQRLGYHFAEALEARITGTMT. The interval 285–350 is VHIID; the sequence is YKGFVQACPT…IGPPLLRVTG (66 aa). Positions 316-320 match the VHIID motif; that stretch reads LHIID. Residues 366 to 398 are leucine repeat II (LRII); that stretch reads ETGRRLKRFCDKFNVPFEYSFIAKNWENITLDD. Residues 407-501 form a PFYRE region; the sequence is TVVNCILRLQ…RELIIRDAMS (95 aa). An SAW region spans residues 504–579; that stretch reads ACEGSERFAR…RVLYAVSCWK (76 aa).

Belongs to the GRAS family. Interacts with SNRNP35 and CYP95. Expressed in seedlings, leaves, sepals, stamen and pistil, and in the quiescent center of root meristem.

It localises to the nucleus. Probable transcription factor involved in plant development. This is Scarecrow-like protein 30 (SCL30) from Arabidopsis thaliana (Mouse-ear cress).